Reading from the N-terminus, the 581-residue chain is Tail sheath protein (581 aa).

Belongs to the myoviridae tail sheath protein family. Homomultimer.

It is found in the virion. It localises to the host cytoplasm. Its function is as follows. Polymerizes as an extended structure around the baseplate-tail tube complex. During ejection, the sheath shifts to a contracted form, thereby making the inner tail tube protrude through the host cell envelope. The sequence is that of Tail sheath protein from Mycobacterium phage Bxz1 (Mycobacteriophage Bxz1).